The chain runs to 292 residues: Putative pyruvate, phosphate dikinase regulatory protein (292 aa).

Position 155–162 (155–162 (GVSRSSKT)) interacts with ADP.

This sequence belongs to the pyruvate, phosphate/water dikinase regulatory protein family. PDRP subfamily.

It carries out the reaction N(tele)-phospho-L-histidyl/L-threonyl-[pyruvate, phosphate dikinase] + ADP = N(tele)-phospho-L-histidyl/O-phospho-L-threonyl-[pyruvate, phosphate dikinase] + AMP + H(+). The enzyme catalyses N(tele)-phospho-L-histidyl/O-phospho-L-threonyl-[pyruvate, phosphate dikinase] + phosphate + H(+) = N(tele)-phospho-L-histidyl/L-threonyl-[pyruvate, phosphate dikinase] + diphosphate. Its function is as follows. Bifunctional serine/threonine kinase and phosphorylase involved in the regulation of the pyruvate, phosphate dikinase (PPDK) by catalyzing its phosphorylation/dephosphorylation. This chain is Putative pyruvate, phosphate dikinase regulatory protein, found in Acidiphilium cryptum (strain JF-5).